A 429-amino-acid polypeptide reads, in one-letter code: Enolase (429 aa).

Glutamine 164 lines the (2R)-2-phosphoglycerate pocket. Glutamate 206 functions as the Proton donor in the catalytic mechanism. Mg(2+)-binding residues include aspartate 243, glutamate 286, and aspartate 313. (2R)-2-phosphoglycerate-binding residues include lysine 338, arginine 367, serine 368, and lysine 389. Lysine 338 serves as the catalytic Proton acceptor.

Belongs to the enolase family. As to quaternary structure, homooctamer. Forms a ring-shaped particle. Requires Mg(2+) as cofactor.

It localises to the cytoplasm. It is found in the secreted. Its subcellular location is the cell surface. It carries out the reaction (2R)-2-phosphoglycerate = phosphoenolpyruvate + H2O. Its pathway is carbohydrate degradation; glycolysis; pyruvate from D-glyceraldehyde 3-phosphate: step 4/5. Its activity is regulated as follows. Inhibited by fluoride and phosphate. In terms of biological role, catalyzes the reversible conversion of 2-phosphoglycerate (2-PG) into phosphoenolpyruvate (PEP). It is essential for the degradation of carbohydrates via glycolysis. The sequence is that of Enolase from Thermotoga maritima (strain ATCC 43589 / DSM 3109 / JCM 10099 / NBRC 100826 / MSB8).